The following is a 255-amino-acid chain: Ribosome maturation factor RimP (255 aa).

Residues 177–255 (LRRGSAPPQD…ARLKNRDTLH (79 aa)) form a disordered region. Acidic residues predominate over residues 186-202 (DGEDVDEEAGEAPEDEV). Residues 216–230 (PKMDKKSDKKSDKPV) show a composition bias toward basic and acidic residues.

This sequence belongs to the RimP family.

It localises to the cytoplasm. In terms of biological role, required for maturation of 30S ribosomal subunits. The chain is Ribosome maturation factor RimP from Methylorubrum populi (strain ATCC BAA-705 / NCIMB 13946 / BJ001) (Methylobacterium populi).